Reading from the N-terminus, the 818-residue chain is MAVTNEEIKTASKIVRRVSNVEAFDKSGSVFKGYQIWTDISPTIENDPNIMFVKCVVQQGSKKEKLTVVQIDPPGTGTPYDIDPTHAWNCNSQVDPMSFGDIGLLNHTNIPCVLDFLKHRYLKNQIYTTAVPLIVAINPYKDLGNTTNEWIRRYRDTADHTKLPPHVFTCAREALSNLHGVNKSQTIIVSGESGAGKTEATKQIMRYFASSKSGNMDLRIQTAIMAANPVLEAFGNAKTIRNNNSSRFGRFMQLVISHEGGIRYGSVVAFLLEKSRIITQDDNERSYHIFYQFLKGANSTMKSKFGLKGVTEYKLLNPNSTEVSGVDDVKDFEEVIESLKNMELSESDIEVIFSIVAGILTLGNVRLIEKQEAGLSDAAAIMDEDMGVFNKACELMYLDPELIKREILIKVTVAGGTKIEGRWNKNDAEVLKSSLCKAMYEKLFLWIIRHLNSRIEPEGGFKTFMGMLDIFGFEVFKNNSLEQLFINITNEMLQKNFVDIVFERESKLYKDEGISTAELKYTSNKEVINVLCEKGKSVLSYLEDQCLAPGGTDEKFVSSCATNLKENNKFTPAKVASNKNFIIQHTIGPIQYCAESFLLKNKDVLRGDLVEVIKDSPNPIVQQLFEGQVIEKGKIAKGSLIGSQFLNQLTSLMNLINSTEPHFIRCIKPNENKKPLEWCEPKILIQLHALSILEALVLRQLGYSYRRTFEEFLYQYKFVDIAAAEDSSVENQNKCVNILKLSGLSESMYKIGKSMVFLKQEGAKILTKIQREKLVEWENCVSVIEAAILKHKYKQKVNKNIPSLLRVQAHIRKKMVAQ.

Residue Ser-19 is modified to Phosphoserine; by PKG. Residues 97–771 form the Myosin motor domain; that stretch reads MSFGDIGLLN…GAKILTKIQR (675 aa). 191 to 198 is an ATP binding site; it reads GESGAGKT. The tract at residues 661 to 671 is actin-binding; the sequence is PHFIRCIKPNE. A tail region spans residues 773–818; the sequence is KLVEWENCVSVIEAAILKHKYKQKVNKNIPSLLRVQAHIRKKMVAQ.

The protein belongs to the TRAFAC class myosin-kinesin ATPase superfamily. Myosin family. Component of the glideosome complex composed of GAP50, GAP45, MTIP and MyoA; the complex is formed during the late schizont stage and in merozoites. MyoA, MTIP and GAP45 probably form an initial complex in the cytoplasm which is then recruited to the outer face of the inner membrane complex via the interaction with GAP50. Interacts with ACT1.

The protein localises to the cell membrane. In terms of biological role, myosins are actin-based motor molecules with ATPase activity. Unconventional myosins serve in intracellular movements. Their highly divergent tails are presumed to bind to membranous compartments, which would be moved relative to actin filaments. The polypeptide is Myosin-A (Plasmodium falciparum (isolate 3D7)).